Consider the following 111-residue polypeptide: Nucleoid-associated protein Tmel_0542 (111 aa).

The protein belongs to the YbaB/EbfC family. In terms of assembly, homodimer.

It localises to the cytoplasm. It is found in the nucleoid. Binds to DNA and alters its conformation. May be involved in regulation of gene expression, nucleoid organization and DNA protection. The protein is Nucleoid-associated protein Tmel_0542 of Thermosipho melanesiensis (strain DSM 12029 / CIP 104789 / BI429).